Consider the following 810-residue polypeptide: Protein kinase C-binding protein NELL1 (810 aa).

The first 21 residues, 1–21 (MPMDVILVLWFCVCTARTVLG), serve as a signal peptide directing secretion. N-linked (GlcNAc...) asparagine glycans are attached at residues Asn-40, Asn-53, Asn-83, Asn-224, Asn-294, and Asn-372. The Laminin G-like domain occupies 57–227 (AFLFQDVQRE…TQCPNLNRTC (171 aa)). A VWFC 1 domain is found at 271-332 (KTCQVSGLLY…ISGQCCKVCR (62 aa)). Cystine bridges form between Cys-395-Cys-407, Cys-401-Cys-416, and Cys-418-Cys-432. 3 residues coordinate Ca(2+): Asp-434, Ile-435, and Glu-437. Residues 434-475 (DIDECAAKMHYCHANTVCVNLPGLYRCDCVPGYIRVDDFSCT) enclose the EGF-like 1; calcium-binding domain. Intrachain disulfides connect Cys-438–Cys-451, Cys-445–Cys-460, Cys-462–Cys-474, Cys-480–Cys-493, Cys-487–Cys-502, Cys-504–Cys-515, Cys-519–Cys-529, Cys-523–Cys-535, Cys-537–Cys-546, Cys-553–Cys-566, Cys-560–Cys-575, Cys-577–Cys-594, Cys-600–Cys-613, Cys-607–Cys-622, and Cys-624–Cys-630. Ca(2+) contacts are provided by Asn-453, Leu-454, and Leu-457. An EGF-like 2; calcium-binding domain is found at 476 to 516 (EHDDCGSGQHNCDKNAICTNTVQGHSCTCQPGYVGNGTICK). N-linked (GlcNAc...) asparagine glycosylation occurs at Asn-511. Positions 517–547 (AFCEEGCRYGGTCVAPNKCVCPSGFTGSHCE) constitute an EGF-like 3 domain. Residues 549 to 587 (DIDECAEGFVECHNHSRCVNLPGWYHCECRSGFHDDGTY) form the EGF-like 4; calcium-binding domain. N-linked (GlcNAc...) asparagine glycosylation occurs at Asn-562. The region spanning 596–631 (DIDECALRTHTCWNDSACINLAGGFDCLCPSGPSCS) is the EGF-like 5; calcium-binding domain. The N-linked (GlcNAc...) asparagine glycan is linked to Asn-609. VWFC domains are found at residues 632–687 (GDCP…PECD) and 692–750 (SQCL…PRCV). A glycan (N-linked (GlcNAc...) asparagine) is linked at Asn-708.

As to quaternary structure, interacts with ATRAID; the interaction promotes osteoblast cell differentiation and mineralization. Homotrimer. Binds to PKC beta-1. Interacts with ROBO3.

Its subcellular location is the cytoplasm. The protein resides in the nucleus envelope. It localises to the secreted. In terms of biological role, plays a role in the control of cell growth and differentiation. Promotes osteoblast cell differentiation and terminal mineralization. In Rattus norvegicus (Rat), this protein is Protein kinase C-binding protein NELL1 (Nell1).